Reading from the N-terminus, the 230-residue chain is Orotidine 5'-phosphate decarboxylase (230 aa).

Residues aspartate 8, lysine 30, 59-68, threonine 118, arginine 178, glutamine 187, glycine 207, and arginine 208 each bind substrate; that span reads DLKLYDIPNT. Lysine 61 acts as the Proton donor in catalysis.

It belongs to the OMP decarboxylase family. Type 1 subfamily. Homodimer.

It catalyses the reaction orotidine 5'-phosphate + H(+) = UMP + CO2. It participates in pyrimidine metabolism; UMP biosynthesis via de novo pathway; UMP from orotate: step 2/2. Catalyzes the decarboxylation of orotidine 5'-monophosphate (OMP) to uridine 5'-monophosphate (UMP). The polypeptide is Orotidine 5'-phosphate decarboxylase (Sulfurovum sp. (strain NBC37-1)).